We begin with the raw amino-acid sequence, 102 residues long: Flagellar hook-basal body complex protein FliE 1 (102 aa).

The protein belongs to the FliE family.

The protein localises to the bacterial flagellum basal body. The polypeptide is Flagellar hook-basal body complex protein FliE 1 (fliE1) (Bradyrhizobium diazoefficiens (strain JCM 10833 / BCRC 13528 / IAM 13628 / NBRC 14792 / USDA 110)).